We begin with the raw amino-acid sequence, 128 residues long: MTAEISAQYWAFAIFIISAIILCVLILTLSFLLGERKHIKVYSRDLPFESGINPVGNPKLHLSAKFYLIAIFFVLFDIEAFYLYAWSSVIREAGWLGFYEAIIFVSVLLSGLVYLVRIGALKWTPNHS.

Transmembrane regions (helical) follow at residues F12–L32, F66–W86, and L96–V116.

This sequence belongs to the complex I subunit 3 family. In terms of assembly, NDH-1 is composed of 14 different subunits. Subunits NuoA, H, J, K, L, M, N constitute the membrane sector of the complex.

Its subcellular location is the cell membrane. It carries out the reaction a quinone + NADH + 5 H(+)(in) = a quinol + NAD(+) + 4 H(+)(out). In terms of biological role, NDH-1 shuttles electrons from NADH, via FMN and iron-sulfur (Fe-S) centers, to quinones in the respiratory chain. The immediate electron acceptor for the enzyme in this species is believed to be ubiquinone. Couples the redox reaction to proton translocation (for every two electrons transferred, four hydrogen ions are translocated across the cytoplasmic membrane), and thus conserves the redox energy in a proton gradient. This Baumannia cicadellinicola subsp. Homalodisca coagulata protein is NADH-quinone oxidoreductase subunit A.